A 358-amino-acid chain; its full sequence is Metacaspase-3 (358 aa).

Residues Met1–Arg84 are important for catalytic activity. Active-site residues include His168 and Cys223.

The protein belongs to the peptidase C14B family. In terms of processing, in epimastigotes, the unprocessed enzyme appears to be the main form. Auto-processing is dispensable for catalytic activity towards small oligopeptide substrates.

It localises to the cytoplasm. Its subcellular location is the nucleus. With respect to regulation, activated by Ca(2+). Cysteine protease that cleaves specifically after arginine or lysine residues. In epimastigotes, may play a role in cell cycle G1/S transition. This Trypanosoma cruzi (strain CL Brener) protein is Metacaspase-3.